The sequence spans 713 residues: Ribosomal RNA large subunit methyltransferase K/L (713 aa).

One can recognise a THUMP domain in the interval Leu-43 to Phe-154.

This sequence belongs to the methyltransferase superfamily. RlmKL family.

It is found in the cytoplasm. It catalyses the reaction guanosine(2445) in 23S rRNA + S-adenosyl-L-methionine = N(2)-methylguanosine(2445) in 23S rRNA + S-adenosyl-L-homocysteine + H(+). The catalysed reaction is guanosine(2069) in 23S rRNA + S-adenosyl-L-methionine = N(2)-methylguanosine(2069) in 23S rRNA + S-adenosyl-L-homocysteine + H(+). Its function is as follows. Specifically methylates the guanine in position 2445 (m2G2445) and the guanine in position 2069 (m7G2069) of 23S rRNA. This Shewanella sp. (strain MR-4) protein is Ribosomal RNA large subunit methyltransferase K/L.